The sequence spans 317 residues: Ceramide reductase (317 aa).

The N-terminal stretch at 1-27 (MATDARGVVAITGATGFLGRHLVRALA) is a signal peptide.

It belongs to the NAD(P)-dependent epimerase/dehydratase family.

It localises to the periplasm. The enzyme catalyses N-acyl-3-oxosphinganine + NADH + H(+) = an N-acylsphinganine + NAD(+). It functions in the pathway lipid metabolism; sphingolipid metabolism. Involved in de novo bacterial ceramide synthesis. Catalyzes the reduction of bacterial oxidized ceramides to bacterial dihydroceramides. In Caulobacter vibrioides (strain NA1000 / CB15N) (Caulobacter crescentus), this protein is Ceramide reductase.